We begin with the raw amino-acid sequence, 259 residues long: Hydroxyethylthiazole kinase (259 aa).

Methionine 37 provides a ligand contact to substrate. Positions 113 and 158 each coordinate ATP. Glycine 185 lines the substrate pocket.

Belongs to the Thz kinase family. Mg(2+) is required as a cofactor.

The catalysed reaction is 5-(2-hydroxyethyl)-4-methylthiazole + ATP = 4-methyl-5-(2-phosphooxyethyl)-thiazole + ADP + H(+). The protein operates within cofactor biosynthesis; thiamine diphosphate biosynthesis; 4-methyl-5-(2-phosphoethyl)-thiazole from 5-(2-hydroxyethyl)-4-methylthiazole: step 1/1. Its function is as follows. Catalyzes the phosphorylation of the hydroxyl group of 4-methyl-5-beta-hydroxyethylthiazole (THZ). This chain is Hydroxyethylthiazole kinase, found in Helicobacter pylori (strain Shi470).